We begin with the raw amino-acid sequence, 431 residues long: Eukaryotic translation initiation factor 5 (431 aa).

Phosphoserine is present on Ser10. Position 27–34 (27–34 (GKGNGIKT)) interacts with GTP. The disordered stretch occupies residues 143–216 (KNPPENSDSG…TTEEAQRRRM (74 aa)). Basic and acidic residues predominate over residues 153 to 170 (TGKKEKEKKNRKGKDKEN). Pro residues predominate over residues 178-193 (TPPPPPPPNEISPPPH). Residues 196 to 209 (EEEEDDDWGEDTTE) are compositionally biased toward acidic residues. Thr227 carries the phosphothreonine modification. Residues Ser229, Ser389, Ser390, and Ser410 each carry the phosphoserine modification. The W2 domain occupies 233–392 (ERTIEERVNI…KEAEEESSGG (160 aa)). Residues Lys413 and Lys418 each participate in a glycyl lysine isopeptide (Lys-Gly) (interchain with G-Cter in SUMO2) cross-link. Ser419 is modified (phosphoserine).

Belongs to the eIF-2-beta/eIF-5 family. Component of the 43S pre-initiation complex (43S PIC), which is composed of the 40S ribosomal subunit, EIF1, eIF1A (EIF1AX), eIF3 complex, EIF5 and eIF2-GTP-initiator tRNA complex (eIF2 ternary complex). Interacts with eIF1A (EIF1AX) during scanning. Interacts through its C-terminal domain (CTD) with EIF1 or with eIF2-beta (EIF2S2) (mutually exclusive) through a common binding site. Interacts through its C-terminal domain (CTD) with the CTD of EIF5B. Interacts with FMR1 isoform 6; this interaction occurs in a RNA-dependent manner.

It localises to the cytoplasm. Component of the 43S pre-initiation complex (43S PIC), which binds to the mRNA cap-proximal region, scans mRNA 5'-untranslated region, and locates the initiation codon. In this complex, acts as a GTPase-activating protein, by promoting GTP hydrolysis by eIF2G (EIF2S3). During scanning, interacts with both EIF1 (via its C-terminal domain (CTD)) and EIF1A (via its NTD). This interaction with EIF1A contributes to the maintenance of EIF1 within the open 43S PIC. When start codon is recognized, EIF5, via its NTD, induces eIF2G (EIF2S3) to hydrolyze the GTP. Start codon recognition also induces a conformational change of the PIC to a closed state. This change increases the affinity of EIF5-CTD for EIF2-beta (EIF2S2), which allows the release, by an indirect mechanism, of EIF1 from the PIC. Finally, EIF5 stabilizes the PIC in its closed conformation. The polypeptide is Eukaryotic translation initiation factor 5 (EIF5) (Pongo abelii (Sumatran orangutan)).